The following is a 420-amino-acid chain: Acyl-coenzyme A amino acid N-acyltransferase 2 (420 aa).

Catalysis depends on charge relay system residues Ser-235, Asp-329, and His-363. The Microbody targeting signal motif lies at 418–420 (SKL).

The protein belongs to the C/M/P thioester hydrolase family.

Its subcellular location is the peroxisome. In terms of biological role, acyltransferase which efficiently conjugates very long-chain and long-chain fatty acids to taurine. Shows no conjugation activity in the presence of glycine. This chain is Acyl-coenzyme A amino acid N-acyltransferase 2, found in Mus musculus (Mouse).